The chain runs to 145 residues: 3-dehydroquinate dehydratase (145 aa).

Tyr-22 serves as the catalytic Proton acceptor. Substrate is bound by residues Asn-71, His-77, and Asp-84. His-97 (proton donor) is an active-site residue. Substrate is bound by residues 98-99 (IS) and Arg-108.

The protein belongs to the type-II 3-dehydroquinase family. In terms of assembly, homododecamer.

It catalyses the reaction 3-dehydroquinate = 3-dehydroshikimate + H2O. The protein operates within metabolic intermediate biosynthesis; chorismate biosynthesis; chorismate from D-erythrose 4-phosphate and phosphoenolpyruvate: step 3/7. Its function is as follows. Catalyzes a trans-dehydration via an enolate intermediate. In Thermotoga neapolitana (strain ATCC 49049 / DSM 4359 / NBRC 107923 / NS-E), this protein is 3-dehydroquinate dehydratase.